The primary structure comprises 108 residues: Iron-sulfur cluster assembly protein CyaY (108 aa).

This sequence belongs to the frataxin family.

In terms of biological role, involved in iron-sulfur (Fe-S) cluster assembly. May act as a regulator of Fe-S biogenesis. This Pseudoalteromonas atlantica (strain T6c / ATCC BAA-1087) protein is Iron-sulfur cluster assembly protein CyaY.